A 300-amino-acid chain; its full sequence is Porphobilinogen deaminase (300 aa).

At cysteine 239 the chain carries S-(dipyrrolylmethanemethyl)cysteine.

The protein belongs to the HMBS family. In terms of assembly, monomer. Requires dipyrromethane as cofactor.

It catalyses the reaction 4 porphobilinogen + H2O = hydroxymethylbilane + 4 NH4(+). It functions in the pathway porphyrin-containing compound metabolism; protoporphyrin-IX biosynthesis; coproporphyrinogen-III from 5-aminolevulinate: step 2/4. Its function is as follows. Tetrapolymerization of the monopyrrole PBG into the hydroxymethylbilane pre-uroporphyrinogen in several discrete steps. The protein is Porphobilinogen deaminase of Francisella tularensis subsp. novicida (strain U112).